The following is a 315-amino-acid chain: HVA22-like protein h (315 aa).

Positions 148 to 315 (PKPKPKEKKQ…RKARSAGAPR (168 aa)) are disordered. The span at 173–190 (ATSQAASSNPQVRLQSKK) shows a compositional bias: polar residues. Residues 234–248 (PPGPPPPPPPPPPSP) are compositionally biased toward pro residues.

The protein belongs to the DP1 family.

The polypeptide is HVA22-like protein h (HVA22H) (Arabidopsis thaliana (Mouse-ear cress)).